Consider the following 309-residue polypeptide: Porphobilinogen deaminase (309 aa).

Cys-244 carries the post-translational modification S-(dipyrrolylmethanemethyl)cysteine.

This sequence belongs to the HMBS family. As to quaternary structure, monomer. Dipyrromethane serves as cofactor.

It carries out the reaction 4 porphobilinogen + H2O = hydroxymethylbilane + 4 NH4(+). The protein operates within porphyrin-containing compound metabolism; protoporphyrin-IX biosynthesis; coproporphyrinogen-III from 5-aminolevulinate: step 2/4. In terms of biological role, tetrapolymerization of the monopyrrole PBG into the hydroxymethylbilane pre-uroporphyrinogen in several discrete steps. This is Porphobilinogen deaminase from Listeria welshimeri serovar 6b (strain ATCC 35897 / DSM 20650 / CCUG 15529 / CIP 8149 / NCTC 11857 / SLCC 5334 / V8).